We begin with the raw amino-acid sequence, 314 residues long: MGEIRSFVLITVALILGKESWVLGDENCLQEQVRLRAQVRQLETRVKQQQVVIAQLLHEKEVQFLDRGQEDSFIDLGGKRHYADCSEIYNDGFKHSGFYKIKPLQSLAEFSVYCDMSDGGGWTVIQRRSDGSENFNRGWNDYENGFGNFVQSNGEYWLGNKNINLLTMQGDYTLKIDLTDFEKNSRFAQYEKFKVGDEKSFYELNIGEYSGTAGDSLSGTFHPEVQWWASHQTMKFSTRDRDNDNYNGNCAEEEQSGWWFNRCHSANLNGVYYQGPYRAETDNGVVWYTWRGWWYSLKSVVMKIRPSDFIPNIV.

The first 22 residues, M1–V22, serve as a signal peptide directing secretion. A coiled-coil region spans residues C28–V62. The Fibrinogen C-terminal domain maps to L76–D308. 2 cysteine pairs are disulfide-bonded: C85-C114 and C250-C263.

As to quaternary structure, homodimer. Interacts (via the Fibrinogen C-terminal domain) with LAG3 (via Ig-like domains 1 and 2).

The protein resides in the secreted. Functionally, immune suppressive molecule that inhibits antigen-specific T-cell activation by acting as a major ligand of LAG3. Responsible for LAG3 T-cell inhibitory function. Binds LAG3 independently from MHC class II (MHC-II). Secreted by, and promotes growth of, hepatocytes. The protein is Fibrinogen-like protein 1 of Rattus norvegicus (Rat).